Consider the following 225-residue polypeptide: T4 protein (225 aa).

It belongs to the poxviruses B9 family.

The polypeptide is T4 protein (Rabbit fibroma virus (strain Kasza) (RFV)).